A 79-amino-acid polypeptide reads, in one-letter code: U16-theraphotoxin-Cg1a (79 aa).

The signal sequence occupies residues 1 to 19 (MRALLIIAGLALFLVVCNA). The propeptide occupies 20–44 (SQVNEQRKLNEMLSVMFAVEEPQER). 3 disulfide bridges follow: Cys-47-Cys-62, Cys-54-Cys-67, and Cys-61-Cys-74.

Belongs to the neurotoxin 10 (Hwtx-1) family. 34 (Jztx-26) subfamily. Expressed by the venom gland.

It is found in the secreted. Its function is as follows. Probable ion channel inhibitor. This chain is U16-theraphotoxin-Cg1a, found in Chilobrachys guangxiensis (Chinese earth tiger tarantula).